Reading from the N-terminus, the 280-residue chain is Bifunctional protein FolD (280 aa).

NADP(+) contacts are provided by residues 164–166 (GRS), Ser189, and Val230.

It belongs to the tetrahydrofolate dehydrogenase/cyclohydrolase family. Homodimer.

It carries out the reaction (6R)-5,10-methylene-5,6,7,8-tetrahydrofolate + NADP(+) = (6R)-5,10-methenyltetrahydrofolate + NADPH. The catalysed reaction is (6R)-5,10-methenyltetrahydrofolate + H2O = (6R)-10-formyltetrahydrofolate + H(+). Its pathway is one-carbon metabolism; tetrahydrofolate interconversion. In terms of biological role, catalyzes the oxidation of 5,10-methylenetetrahydrofolate to 5,10-methenyltetrahydrofolate and then the hydrolysis of 5,10-methenyltetrahydrofolate to 10-formyltetrahydrofolate. This is Bifunctional protein FolD from Geotalea uraniireducens (strain Rf4) (Geobacter uraniireducens).